A 271-amino-acid chain; its full sequence is Pyrroline-5-carboxylate reductase (271 aa).

It belongs to the pyrroline-5-carboxylate reductase family.

It is found in the cytoplasm. It catalyses the reaction L-proline + NADP(+) = (S)-1-pyrroline-5-carboxylate + NADPH + 2 H(+). The enzyme catalyses L-proline + NAD(+) = (S)-1-pyrroline-5-carboxylate + NADH + 2 H(+). The protein operates within amino-acid biosynthesis; L-proline biosynthesis; L-proline from L-glutamate 5-semialdehyde: step 1/1. In terms of biological role, catalyzes the reduction of 1-pyrroline-5-carboxylate (PCA) to L-proline. The sequence is that of Pyrroline-5-carboxylate reductase from Staphylococcus epidermidis (strain ATCC 35984 / DSM 28319 / BCRC 17069 / CCUG 31568 / BM 3577 / RP62A).